A 317-amino-acid polypeptide reads, in one-letter code: Ribosomal RNA small subunit methyltransferase H (317 aa).

S-adenosyl-L-methionine is bound by residues 30-32, D50, Y74, D95, and Q102; that span reads GGH.

This sequence belongs to the methyltransferase superfamily. RsmH family.

The protein localises to the cytoplasm. The enzyme catalyses cytidine(1402) in 16S rRNA + S-adenosyl-L-methionine = N(4)-methylcytidine(1402) in 16S rRNA + S-adenosyl-L-homocysteine + H(+). Functionally, specifically methylates the N4 position of cytidine in position 1402 (C1402) of 16S rRNA. In Nitrosomonas europaea (strain ATCC 19718 / CIP 103999 / KCTC 2705 / NBRC 14298), this protein is Ribosomal RNA small subunit methyltransferase H.